A 346-amino-acid polypeptide reads, in one-letter code: L-threonine dehydratase catabolic TdcB (346 aa).

AMP is bound at residue 59–60; sequence FT. Lys-64 is subject to N6-(pyridoxal phosphate)lysine. AMP contacts are provided by residues Gln-94, 125–126, and Asn-321; that span reads GY.

It belongs to the serine/threonine dehydratase family. As to quaternary structure, in the native structure, TdcB is in a dimeric form, whereas in the TdcB-AMP complex, it exists in a tetrameric form (dimer of dimers). Pyridoxal 5'-phosphate is required as a cofactor.

The enzyme catalyses L-threonine = 2-oxobutanoate + NH4(+). Its pathway is amino-acid degradation; L-threonine degradation via propanoate pathway; propanoate from L-threonine: step 1/4. With respect to regulation, each protein molecule can bind up to four molecules of AMP, which act as an allosteric activator to the enzyme. In terms of biological role, catalyzes the anaerobic formation of alpha-ketobutyrate and ammonia from threonine in a two-step reaction. The first step involved a dehydration of threonine and a production of enamine intermediates (aminocrotonate), which tautomerizes to its imine form (iminobutyrate). Both intermediates are unstable and short-lived. The second step is the nonenzymatic hydrolysis of the enamine/imine intermediates to form 2-ketobutyrate and free ammonia. In the low water environment of the cell, the second step is accelerated by RidA. This is L-threonine dehydratase catabolic TdcB (tdcB) from Staphylococcus aureus (strain USA300).